The sequence spans 166 residues: Interferon gamma (166 aa).

Residues 1 to 23 (MKYTSYILAFQLCIVLGSLGCYC) form the signal peptide. Glutamine 24 carries the post-translational modification Pyrrolidone carboxylic acid. N-linked (GlcNAc...) asparagine glycans are attached at residues asparagine 48, asparagine 86, and asparagine 120.

This sequence belongs to the type II (or gamma) interferon family. Homodimer. Interacts with IFNGR1 (via extracellular domain); this interaction promotes IFNGR1 dimerization. In terms of tissue distribution, released primarily from activated T lymphocytes.

Its subcellular location is the secreted. Functionally, type II interferon produced by immune cells such as T-cells and NK cells that plays crucial roles in antimicrobial, antiviral, and antitumor responses by activating effector immune cells and enhancing antigen presentation. Primarily signals through the JAK-STAT pathway after interaction with its receptor IFNGR1 to affect gene regulation. Upon IFNG binding, IFNGR1 intracellular domain opens out to allow association of downstream signaling components JAK2, JAK1 and STAT1, leading to STAT1 activation, nuclear translocation and transcription of IFNG-regulated genes. Many of the induced genes are transcription factors such as IRF1 that are able to further drive regulation of a next wave of transcription. Plays a role in class I antigen presentation pathway by inducing a replacement of catalytic proteasome subunits with immunoproteasome subunits. In turn, increases the quantity, quality, and repertoire of peptides for class I MHC loading. Increases the efficiency of peptide generation also by inducing the expression of activator PA28 that associates with the proteasome and alters its proteolytic cleavage preference. Up-regulates as well MHC II complexes on the cell surface by promoting expression of several key molecules such as cathepsins B/CTSB, H/CTSH, and L/CTSL. Participates in the regulation of hematopoietic stem cells during development and under homeostatic conditions by affecting their development, quiescence, and differentiation. The chain is Interferon gamma (IFNG) from Saimiri sciureus (Common squirrel monkey).